The chain runs to 229 residues: E3 ubiquitin ligase TRIM40 (229 aa).

An RING-type zinc finger spans residues 14–57; it reads CPICQESLKEAVSTNCGHLFCRVCLTQHVEKASASGVFCCPLCR. A B box-type zinc finger spans residues 66–107; the sequence is GTGYICPNHQKRVCRFCEESRLLLCVECLVSPEHMSHHELTI. Zn(2+) contacts are provided by cysteine 71, histidine 74, cysteine 93, and histidine 99. Residues 107-154 are a coiled coil; the sequence is IENALSHYKERLNRRSRKLRKDIAELQRLKAQQEKKLQALQQWLGQLE.

This sequence belongs to the TRIM/RBCC family. In terms of assembly, interacts with NEDD8.

The enzyme catalyses S-ubiquitinyl-[E2 ubiquitin-conjugating enzyme]-L-cysteine + [acceptor protein]-L-lysine = [E2 ubiquitin-conjugating enzyme]-L-cysteine + N(6)-ubiquitinyl-[acceptor protein]-L-lysine.. In terms of biological role, E3 ubiquitin-protein ligase that plays a role in the limitation of the innate immune response. Mediates inhibition of the RLR signaling pathway by ubiquitinating RIGI and IFIH1 receptors, leading to their proteasomal degradation. Also promotes the neddylation of IKBKG/NEMO, stabilizing NFKBIA, and thereby inhibiting of NF-kappa-B nuclear translocation and activation. This is E3 ubiquitin ligase TRIM40 (TRIM40) from Pan troglodytes (Chimpanzee).